Here is a 129-residue protein sequence, read N- to C-terminus: Protein RfbJ (129 aa).

This sequence belongs to the glycosyltransferase 2 family.

It functions in the pathway bacterial outer membrane biogenesis; lipopolysaccharide biosynthesis. This Shigella flexneri protein is Protein RfbJ (rfbJ).